A 213-amino-acid polypeptide reads, in one-letter code: MAKNLSIIDRAIVGFDSSLRAIIPHSNQTARPLPVSSDALPQLSITESRHVAGLMRINHTGEVCAQGLYHGQAFTAKDDLVKQAMQHSADEEIDHLVWCETRLDELGSHPSVFTPVWYGLSFGLGAIAGIISDEFSLGFVAETEAQVSEHLQDHIDQLPEQDTRSKEILAQMNIEELEHREAALNHGGKALSAPVRISMRWMANRMKNLAYHL.

Residues glutamate 62, glutamate 92, histidine 95, glutamate 144, glutamate 176, and histidine 179 each contribute to the Fe cation site.

This sequence belongs to the COQ7 family. It depends on Fe cation as a cofactor.

Its subcellular location is the cell membrane. It carries out the reaction a 5-methoxy-2-methyl-3-(all-trans-polyprenyl)benzene-1,4-diol + AH2 + O2 = a 3-demethylubiquinol + A + H2O. It participates in cofactor biosynthesis; ubiquinone biosynthesis. Catalyzes the hydroxylation of 2-nonaprenyl-3-methyl-6-methoxy-1,4-benzoquinol during ubiquinone biosynthesis. The chain is 3-demethoxyubiquinol 3-hydroxylase from Psychrobacter sp. (strain PRwf-1).